The chain runs to 136 residues: Small ribosomal subunit protein uS9 (136 aa).

The interval 97–136 is disordered; it reads SPDNRKPLKTEGHLSRDPRAKERRKYGLKKARKAPQFSKR. Over residues 98-116 the composition is skewed to basic and acidic residues; that stretch reads PDNRKPLKTEGHLSRDPRA. Over residues 117 to 136 the composition is skewed to basic residues; it reads KERRKYGLKKARKAPQFSKR.

This sequence belongs to the universal ribosomal protein uS9 family.

The chain is Small ribosomal subunit protein uS9 from Prochlorococcus marinus (strain MIT 9301).